The chain runs to 515 residues: 1-pyrroline-5-carboxylate dehydrogenase (515 aa).

Active-site residues include glutamate 286 and cysteine 320.

This sequence belongs to the aldehyde dehydrogenase family. RocA subfamily.

The catalysed reaction is L-glutamate 5-semialdehyde + NAD(+) + H2O = L-glutamate + NADH + 2 H(+). It participates in amino-acid degradation; L-proline degradation into L-glutamate; L-glutamate from L-proline: step 2/2. The protein is 1-pyrroline-5-carboxylate dehydrogenase of Bacillus cereus (strain ATCC 10987 / NRS 248).